The following is a 551-amino-acid chain: Membrane protein insertase YidC (551 aa).

The helical transmembrane segment at 3 to 23 (ANHIRILLLVTIAIMFISLMG) threads the bilayer. A compositionally biased stretch (polar residues) spans 33–47 (NTKQQTSATQNNSHY). Residues 33–59 (NTKQQTSATQNNSHYDNADSSTNTDVT) are disordered. Low complexity predominate over residues 50–59 (ADSSTNTDVT). The next 3 membrane-spanning stretches (helical) occupy residues 361 to 381 (LVGN…LIFY), 431 to 451 (LSGC…YWVL), and 504 to 524 (VMMF…SGLV).

It belongs to the OXA1/ALB3/YidC family. Type 1 subfamily. Interacts with the Sec translocase complex via SecD. Specifically interacts with transmembrane segments of nascent integral membrane proteins during membrane integration.

It localises to the cell inner membrane. Its function is as follows. Required for the insertion and/or proper folding and/or complex formation of integral membrane proteins into the membrane. Involved in integration of membrane proteins that insert both dependently and independently of the Sec translocase complex, as well as at least some lipoproteins. Aids folding of multispanning membrane proteins. The polypeptide is Membrane protein insertase YidC (Francisella tularensis subsp. mediasiatica (strain FSC147)).